A 68-amino-acid polypeptide reads, in one-letter code: Large ribosomal subunit protein uL29 (68 aa).

This sequence belongs to the universal ribosomal protein uL29 family.

This chain is Large ribosomal subunit protein uL29, found in Rhodopseudomonas palustris (strain BisB18).